We begin with the raw amino-acid sequence, 353 residues long: Paraxanthine methyltransferase 2 (353 aa).

S-adenosyl-L-methionine is bound at residue Y18. Substrate is bound by residues Y18 and 21–25 (QSSYQ). Residues G59, 59–60 (GC), N65, 99–102 (FNDL), 128–130 (SFF), and 145–147 (SYA) contribute to the S-adenosyl-L-methionine site. 146 to 150 (YAFLF) contributes to the substrate binding site. Positions 167, 252, and 254 each coordinate Mg(2+). Residues S301 and Y306 each coordinate substrate.

The protein belongs to the methyltransferase superfamily. SABATH family. As to quaternary structure, homodimer. The cofactor is Mg(2+).

The protein is Paraxanthine methyltransferase 2 of Arabidopsis thaliana (Mouse-ear cress).